Reading from the N-terminus, the 209-residue chain is Uracil phosphoribosyltransferase (209 aa).

5-phospho-alpha-D-ribose 1-diphosphate is bound by residues Arg-79, Arg-104, and Asp-131 to Ser-139. Residues Ile-194 and Gly-199–Ala-201 each bind uracil. Asp-200 serves as a coordination point for 5-phospho-alpha-D-ribose 1-diphosphate.

The protein belongs to the UPRTase family. Mg(2+) is required as a cofactor.

The catalysed reaction is UMP + diphosphate = 5-phospho-alpha-D-ribose 1-diphosphate + uracil. The protein operates within pyrimidine metabolism; UMP biosynthesis via salvage pathway; UMP from uracil: step 1/1. With respect to regulation, allosterically activated by GTP. Catalyzes the conversion of uracil and 5-phospho-alpha-D-ribose 1-diphosphate (PRPP) to UMP and diphosphate. The chain is Uracil phosphoribosyltransferase from Variovorax paradoxus (strain S110).